An 80-amino-acid polypeptide reads, in one-letter code: Conotoxin MaIr193 (80 aa).

An N-terminal signal peptide occupies residues 1–22 (MKLTCMMIVAVLFLTAWTLVTA). Positions 23-51 (DGTRDGLKNRFPKARLEMKNSEAPRSRGR) are excised as a propeptide. Disulfide bonds link cysteine 52–cysteine 69, cysteine 59–cysteine 73, and cysteine 68–cysteine 77. 4-hydroxyproline is present on proline 64.

It belongs to the conotoxin O1 superfamily. In terms of tissue distribution, expressed by the venom duct.

The protein localises to the secreted. The protein is Conotoxin MaIr193 of Conus marmoreus (Marble cone).